Here is a 257-residue protein sequence, read N- to C-terminus: Ribonuclease HII (257 aa).

One can recognise an RNase H type-2 domain in the interval 72-257; sequence TYIAGIDEVG…FAPIKDMIKK (186 aa). A divalent metal cation contacts are provided by aspartate 78, glutamate 79, and aspartate 170.

It belongs to the RNase HII family. Mn(2+) serves as cofactor. Requires Mg(2+) as cofactor.

It is found in the cytoplasm. The catalysed reaction is Endonucleolytic cleavage to 5'-phosphomonoester.. Endonuclease that specifically degrades the RNA of RNA-DNA hybrids. The sequence is that of Ribonuclease HII from Bacillus anthracis (strain A0248).